A 289-amino-acid chain; its full sequence is MGASLNEIKTKIASTKKTSQITGAMQMVSAAKLQKAESHAKAFQIYAEKVRKITTDLVSSDKEPAKNPMMIKREVKKTGYLVITSDRGLVGGYNSNILKSVMNTIRKRHANESEYTILALGGTGADFFKARNVKVSYVLRGLSDQPTFEEVRAIVTEAVTEYQAEEFDELYVCYNHHVNSLVSDARMEKMLPISFEESGQQKPSLETFELEPDRETILNQLLPQYAESMIYGSIVDAKTAEHAAGMTAMRTATDNAHSVINDLTIQYNRARQASITQEITEIVAGASAL.

The protein belongs to the ATPase gamma chain family. In terms of assembly, F-type ATPases have 2 components, CF(1) - the catalytic core - and CF(0) - the membrane proton channel. CF(1) has five subunits: alpha(3), beta(3), gamma(1), delta(1), epsilon(1). CF(0) has three main subunits: a, b and c.

The protein localises to the cell membrane. In terms of biological role, produces ATP from ADP in the presence of a proton gradient across the membrane. The gamma chain is believed to be important in regulating ATPase activity and the flow of protons through the CF(0) complex. In Lactococcus lactis subsp. lactis (strain IL1403) (Streptococcus lactis), this protein is ATP synthase gamma chain.